The following is a 292-amino-acid chain: 4-hydroxybenzoate octaprenyltransferase (292 aa).

A run of 8 helical transmembrane segments spans residues 20–40 (IGIL…ADGM), 43–63 (PMIL…GCAI), 94–114 (LLIA…LNLL), 135–155 (FFAM…PMAF), 160–180 (GTVP…VIAY), 209–229 (VAGI…AGIL), 234–254 (IWFY…YGMI), and 266–286 (FLHN…DTLF).

Belongs to the UbiA prenyltransferase family. Requires Mg(2+) as cofactor.

The protein localises to the cell inner membrane. The catalysed reaction is all-trans-octaprenyl diphosphate + 4-hydroxybenzoate = 4-hydroxy-3-(all-trans-octaprenyl)benzoate + diphosphate. It participates in cofactor biosynthesis; ubiquinone biosynthesis. Catalyzes the prenylation of para-hydroxybenzoate (PHB) with an all-trans polyprenyl group. Mediates the second step in the final reaction sequence of ubiquinone-8 (UQ-8) biosynthesis, which is the condensation of the polyisoprenoid side chain with PHB, generating the first membrane-bound Q intermediate 3-octaprenyl-4-hydroxybenzoate. The chain is 4-hydroxybenzoate octaprenyltransferase from Nitrosomonas europaea (strain ATCC 19718 / CIP 103999 / KCTC 2705 / NBRC 14298).